A 266-amino-acid polypeptide reads, in one-letter code: Undecaprenyl-diphosphatase (266 aa).

The next 7 helical transmembrane spans lie at 8 to 28 (VLAL…AHLI), 39 to 59 (QGLA…VIYF), 87 to 107 (WAVG…HDII), 113 to 133 (SAQV…FADV), 188 to 208 (SFLL…LGLV), 219 to 239 (MIVL…HYFL), and 246 to 266 (TMLP…FLFW).

This sequence belongs to the UppP family.

The protein localises to the cell inner membrane. The catalysed reaction is di-trans,octa-cis-undecaprenyl diphosphate + H2O = di-trans,octa-cis-undecaprenyl phosphate + phosphate + H(+). Catalyzes the dephosphorylation of undecaprenyl diphosphate (UPP). Confers resistance to bacitracin. The polypeptide is Undecaprenyl-diphosphatase (Thioalkalivibrio sulfidiphilus (strain HL-EbGR7)).